We begin with the raw amino-acid sequence, 744 residues long: MSSTRIELDQDFIDQVKHEIKPHWGELGWVTYKRTYARWLPEKNRSENWDETVKRVIEGNVNLDPRLQGTPSEEVINELTNEAKQLFRLTYGLSATPSGRNLWISGTDYQKRTGDSLNNCWFIAIRPQEYGDSHIVPTYIDKREKAVSMPFSFLFDQLMKGGGVGFSVVNSNIKQIPKVDNKIDLTVVINKSSKSHDASIKVGAVDKDEWEKQNPDHDDIIYYRLPDTREGWVLANARLIDMHFNNTNPDQKTKLVLDISDIRPYGAKIHGFGGTASGPMPLVEMFIDINNVINARVGKNLTAVDATDICNLIGKTVVAGNVRRSAELALGSNDDQDFIKMKQDKEKLYHHRWASNNSVAINSKFNNYGPIADGILHNGEPGIVNLDLSRNYGRIVDGYQPGIDDDVEGTNPCGEISLANGEPCNLFEVFPYTAEKQGWNLKEAFTLATRFAKRVTFSHYDWEVSRKIIQKNRRIGVSMSGIQDWLLNDLGHRVVTGFEDAVDEQSGEKIKKPIYDPKGIEMVDSLYKAVITADKAYSEELGVNPSIKHTTVKPSGTVAKLAGVSEGMHFHYAGYLIQRIRFQASDPLLPALKECGYHTEPDIYTKNTICVEFPLRAAHADSKNFASAGTVSIEEQFATQAFLQTYWSDNAVSCTITFQSDENDEIAPLLRQYRHTIKSTSLLPYYGGSLKQAPKEPINKKTYEERAALITDDVEEVFTKQNDDQKGLELVGQTDCEGGACPIK.

The cysteines at positions 120 and 424 are disulfide-linked. Residues 148–159 form an effector region-1 region; the sequence is SMPFSFLFDQLM. An effector region-2 region spans residues 169 to 318; it reads VNSNIKQIPK…ICNLIGKTVV (150 aa). Residues cysteine 413 and glutamate 415 contribute to the active site. The adenosylcobalamin-binding-1 stretch occupies residues 570-631; it reads FHYAGYLIQR…SKNFASAGTV (62 aa). An adenosylcobalamin-binding-2 region spans residues 690–729; it reads LKQAPKEPINKKTYEERAALITDDVEEVFTKQNDDQKGLE.

This sequence belongs to the class II ribonucleoside-triphosphate reductase family. As to quaternary structure, monomer. Requires adenosylcob(III)alamin as cofactor.

It carries out the reaction a 2'-deoxyribonucleoside 5'-triphosphate + [thioredoxin]-disulfide + H2O = a ribonucleoside 5'-triphosphate + [thioredoxin]-dithiol. Allosterically regulated by ATP and dNTP. The polypeptide is Adenosylcobalamin-dependent ribonucleoside-triphosphate reductase (rtpR) (Lactobacillus acidophilus (strain ATCC 700396 / NCK56 / N2 / NCFM)).